The chain runs to 354 residues: Acyl-CoA-binding domain-containing protein 2 (354 aa).

The helical; Signal-anchor transmembrane segment at 11 to 31 (VILGLIFSYLLAKLISIVVTF) threads the bilayer. The segment at 75–96 (AEQGSSRSDSVAGDDSEEDDDW) is disordered. A compositionally biased stretch (acidic residues) spans 86–96 (AGDDSEEDDDW). The region spanning 104 to 194 (LDEAFSAATL…VTQLYPTWLD (91 aa)) is the ACB domain. Residues 136-140 (YGLYK), Lys-162, and Tyr-181 contribute to the an acyl-CoA site. ANK repeat units follow at residues 265–294 (EGRT…DVNA) and 298–327 (EGQT…NTAA).

It belongs to the ACBP family. As to quaternary structure, interacts (via ankyrin repeats) with HIPP26 and the ethylene-responsive element-binding proteins RAP2-3/EBP and RAP2-12. Interacts with CSE. Mostly expressed in roots and flowers, and, to a lower extent, in stems, pods and leaves (at protein level).

The protein localises to the cell membrane. The protein resides in the endoplasmic reticulum membrane. It is found in the peroxisome membrane. Its function is as follows. Binds medium- and long-chain acyl-CoA esters with very high affinity. Can interact in vitro with palmitoyl-CoA, but not with oleoyl-CoA. Binds to lead ions (Pb). May function as an intracellular carrier of acyl-CoA esters. Required for proper phospholipid and, to a lower extent, galactolipid composition. The protein is Acyl-CoA-binding domain-containing protein 2 (ACBP2) of Arabidopsis thaliana (Mouse-ear cress).